The chain runs to 403 residues: S-adenosylmethionine synthase (403 aa).

His-15 lines the ATP pocket. Asp-17 contacts Mg(2+). Position 43 (Glu-43) interacts with K(+). L-methionine-binding residues include Glu-56 and Gln-99. Residues 99–109 (QSPDINQGVDR) are flexible loop. ATP is bound by residues 166-168 (DAK), 232-233 (KF), Asp-241, 247-248 (RK), Ala-264, and Lys-268. Position 241 (Asp-241) interacts with L-methionine. Lys-272 contacts L-methionine.

It belongs to the AdoMet synthase family. In terms of assembly, homotetramer; dimer of dimers. It depends on Mg(2+) as a cofactor. K(+) serves as cofactor.

The protein localises to the cytoplasm. It carries out the reaction L-methionine + ATP + H2O = S-adenosyl-L-methionine + phosphate + diphosphate. It participates in amino-acid biosynthesis; S-adenosyl-L-methionine biosynthesis; S-adenosyl-L-methionine from L-methionine: step 1/1. Catalyzes the formation of S-adenosylmethionine (AdoMet) from methionine and ATP. The overall synthetic reaction is composed of two sequential steps, AdoMet formation and the subsequent tripolyphosphate hydrolysis which occurs prior to release of AdoMet from the enzyme. The protein is S-adenosylmethionine synthase of Xanthomonas axonopodis pv. citri (strain 306).